A 453-amino-acid polypeptide reads, in one-letter code: Bifunctional protein GlmU (453 aa).

The interval 1 to 227 (MTQDIVILAA…EAEVAGVNDR (227 aa)) is pyrophosphorylase. Residues 8–11 (LAAG), Lys22, Gln73, 78–79 (GT), 100–102 (YGD), Gly137, Glu152, Asn167, and Asn225 contribute to the UDP-N-acetyl-alpha-D-glucosamine site. Position 102 (Asp102) interacts with Mg(2+). Asn225 lines the Mg(2+) pocket. Residues 228-248 (VQLAALERELQNQQAVSLMQN) form a linker region. Residues 249–453 (GATLLDPSRI…KDNWPRPIKK (205 aa)) form an N-acetyltransferase region. Arg331 and Lys349 together coordinate UDP-N-acetyl-alpha-D-glucosamine. Catalysis depends on His361, which acts as the Proton acceptor. The UDP-N-acetyl-alpha-D-glucosamine site is built by Tyr364 and Asn375. Acetyl-CoA-binding positions include Ala378, 384–385 (NY), Ser403, Ala421, and Arg438.

In the N-terminal section; belongs to the N-acetylglucosamine-1-phosphate uridyltransferase family. The protein in the C-terminal section; belongs to the transferase hexapeptide repeat family. In terms of assembly, homotrimer. Mg(2+) serves as cofactor.

The protein localises to the cytoplasm. It catalyses the reaction alpha-D-glucosamine 1-phosphate + acetyl-CoA = N-acetyl-alpha-D-glucosamine 1-phosphate + CoA + H(+). The catalysed reaction is N-acetyl-alpha-D-glucosamine 1-phosphate + UTP + H(+) = UDP-N-acetyl-alpha-D-glucosamine + diphosphate. The protein operates within nucleotide-sugar biosynthesis; UDP-N-acetyl-alpha-D-glucosamine biosynthesis; N-acetyl-alpha-D-glucosamine 1-phosphate from alpha-D-glucosamine 6-phosphate (route II): step 2/2. It functions in the pathway nucleotide-sugar biosynthesis; UDP-N-acetyl-alpha-D-glucosamine biosynthesis; UDP-N-acetyl-alpha-D-glucosamine from N-acetyl-alpha-D-glucosamine 1-phosphate: step 1/1. It participates in bacterial outer membrane biogenesis; LPS lipid A biosynthesis. In terms of biological role, catalyzes the last two sequential reactions in the de novo biosynthetic pathway for UDP-N-acetylglucosamine (UDP-GlcNAc). The C-terminal domain catalyzes the transfer of acetyl group from acetyl coenzyme A to glucosamine-1-phosphate (GlcN-1-P) to produce N-acetylglucosamine-1-phosphate (GlcNAc-1-P), which is converted into UDP-GlcNAc by the transfer of uridine 5-monophosphate (from uridine 5-triphosphate), a reaction catalyzed by the N-terminal domain. The chain is Bifunctional protein GlmU from Marinomonas sp. (strain MWYL1).